The sequence spans 372 residues: MTATPTASLPPLANDRFLRACLRLPTDVTPVWLMRQAGRYLSEYRDTRAKAGSFMGLATNPQYATEVTLQPLDRYPLDAAILFSDILTVPDAMGLGLSFAQGEGPRFAHPLRDEADVAKLQVPDMEKLRYVFDAVASIRRALAPAGAPGRVPLIGFSGSPWTLACYMVEGAGSDDYRLVKTLLYRRPDLMHRILEVNADAVAAYLNAQIEAGAQAVMIFDSWGGVLADGAFQRFSLAYTERVLRQLKKEQGGYRVPQIVFTKGGGLWLEAIADSGCDVVGLDWTMNLGAARARVGDRVALQGNLDPNVLFADPEQIRAEVARTLDSYGAPSAGSGHVFNLGHGISQHTPPDSVSVLVDAVHSYSRQQRGAAG.

Substrate is bound by residues 35 to 39 (RQAGR), aspartate 85, tyrosine 166, serine 221, and histidine 342.

The protein belongs to the uroporphyrinogen decarboxylase family. In terms of assembly, homodimer.

It localises to the cytoplasm. The enzyme catalyses uroporphyrinogen III + 4 H(+) = coproporphyrinogen III + 4 CO2. It participates in porphyrin-containing compound metabolism; protoporphyrin-IX biosynthesis; coproporphyrinogen-III from 5-aminolevulinate: step 4/4. Catalyzes the decarboxylation of four acetate groups of uroporphyrinogen-III to yield coproporphyrinogen-III. This chain is Uroporphyrinogen decarboxylase, found in Methylibium petroleiphilum (strain ATCC BAA-1232 / LMG 22953 / PM1).